The following is a 219-amino-acid chain: MTQDEMKKAAGWAALKYVEKDSIVGVGTGSTVNHFIDALATMKADIEGAVSSSEASTQKMKALGIPVYDLNSVDKLSVYVDGADEINGHMDMIKGGGAALTREKIVAAVAEKFVCIVDNTKQVDILGKFPLPVEVIPMARSYVARELVKLGGDPVYREGVVTDNGNVILDVYNLKIINPKELEEKINAIVGVVTNGLFAKRGADVLLVGTPEGVKTFTA.

Residues 28–31, 81–84, and 94–97 each bind substrate; these read TGST, DGAD, and KGGG. The active-site Proton acceptor is the glutamate 103. Lysine 121 is a binding site for substrate.

The protein belongs to the ribose 5-phosphate isomerase family. Homodimer.

It carries out the reaction aldehydo-D-ribose 5-phosphate = D-ribulose 5-phosphate. It functions in the pathway carbohydrate degradation; pentose phosphate pathway; D-ribose 5-phosphate from D-ribulose 5-phosphate (non-oxidative stage): step 1/1. Functionally, catalyzes the reversible conversion of ribose-5-phosphate to ribulose 5-phosphate. The protein is Ribose-5-phosphate isomerase A of Shewanella sp. (strain ANA-3).